Reading from the N-terminus, the 753-residue chain is Neuroendocrine convertase 1 (753 aa).

Positions Met1–Ala27 are cleaved as a signal peptide. A propeptide spanning residues Lys28–Arg110 is cleaved from the precursor. The region spanning Gln129 to Val450 is the Peptidase S8 domain. Asp167 (charge relay system) is an active-site residue. Asn173 is a glycosylation site (N-linked (GlcNAc...) asparagine). His208 acts as the Charge relay system in catalysis. Disulfide bonds link Cys225–Cys374 and Cys317–Cys347. Ser382 acts as the Charge relay system in catalysis. An N-linked (GlcNAc...) asparagine glycan is attached at Asn401. Residues Ser460–Gln597 enclose the P/Homo B domain. Residues Cys467 and Cys494 are joined by a disulfide bond. Disordered stretches follow at residues Arg617–Glu657 and Ser676–Ile695.

This sequence belongs to the peptidase S8 family. Furin subfamily. Requires Ca(2+) as cofactor.

The protein resides in the cytoplasmic vesicle. The protein localises to the secretory vesicle. It carries out the reaction Release of protein hormones, neuropeptides and renin from their precursors, generally by hydrolysis of -Lys-Arg-|- bonds.. In terms of biological role, involved in the processing of hormone and other protein precursors at sites comprised of pairs of basic amino acid residues. Substrates include POMC, renin, enkephalin, dynorphin, somatostatin, insulin and AGRP. The chain is Neuroendocrine convertase 1 (PCSK1) from Bos taurus (Bovine).